The chain runs to 638 residues: 1-deoxy-D-xylulose-5-phosphate synthase (638 aa).

Thiamine diphosphate contacts are provided by residues His-79 and 120–122; that span reads AHS. Asp-151 contributes to the Mg(2+) binding site. Thiamine diphosphate is bound by residues 152 to 153, Asn-180, Tyr-289, and Glu-371; that span reads GA. Asn-180 is a binding site for Mg(2+).

This sequence belongs to the transketolase family. DXPS subfamily. Homodimer. The cofactor is Mg(2+). Thiamine diphosphate serves as cofactor.

The catalysed reaction is D-glyceraldehyde 3-phosphate + pyruvate + H(+) = 1-deoxy-D-xylulose 5-phosphate + CO2. It functions in the pathway metabolic intermediate biosynthesis; 1-deoxy-D-xylulose 5-phosphate biosynthesis; 1-deoxy-D-xylulose 5-phosphate from D-glyceraldehyde 3-phosphate and pyruvate: step 1/1. Catalyzes the acyloin condensation reaction between C atoms 2 and 3 of pyruvate and glyceraldehyde 3-phosphate to yield 1-deoxy-D-xylulose-5-phosphate (DXP). The polypeptide is 1-deoxy-D-xylulose-5-phosphate synthase (Rhizobium leguminosarum bv. trifolii (strain WSM2304)).